The chain runs to 84 residues: MALINPQFPYAGPVPIPGPAPTETMPLLNYRVEGRIAGIQQARQFMPFLQGPHRAVAEQTYHAIGTGIQMGQTFNQPLINTQEG.

In terms of assembly, dimer.

The protein resides in the virion. In terms of biological role, minor capsid protein essential for stable capsid assembly of complete particles. In Enterobacteria phage PRD1 (Bacteriophage PRD1), this protein is Minor capsid protein P30 (XXX).